A 531-amino-acid chain; its full sequence is MLGFLSRGPSMKLCMGLACVLSLWNTVSGIKGEAKKEKGMTFLPTTVSGLREEERKEKGVAFLATTELPARSIDLSALNLTELVNGMLSRALKDSKKFFSLLSVTSYSSFAFHKFSVAVYNISNLKTVDPAKFPTRYCYCLNNRTNDLSDFTALLVDIIGNSTSYLTEIFKSTSILSVNQSNESDCIFICVMTGKSGRNLSDFWEIEEKYPIINYTFTSGLSGVLGAATRGTARTSKPTTKSQKTLPSTSPGHWTQSTPWASALRSSPWTETAAPSETEETLNTGRPPELPARATATWFSASHTLPALATRRVARTQWLTADRQTWASISSVPWAQTISEKKPGGSLWETRSSPPTTAGTEEAMNTTSLLAPAAEIMATPGSPSQASPTLGAFTHGTQTPSPTKATAPRYPQTGDLSAEWPFTAGEEPVLVPRPHQVSRCPQPLFKVGAMAAAPLTLAIQRLNPCLMELCQFFQQCLCMSQRSPRTEDMRYCLEYYSWFLKNATYICQRVKRVSHSHTLKQKCLENICKSV.

The first 29 residues, 1-29 (MLGFLSRGPSMKLCMGLACVLSLWNTVSG), serve as a signal peptide directing secretion. 3 N-linked (GlcNAc...) asparagine glycosylation sites follow: Asn-79, Asn-143, and Asn-161. Disordered regions lie at residues 231–289 (GTAR…RPPE) and 340–362 (EKKPGGSLWETRSSPPTTAGTEE). Polar residues-rich tracts occupy residues 232–269 (TARTSKPTTKSQKTLPSTSPGHWTQSTPWASALRSSPW) and 349–362 (ETRSSPPTTAGTEE).

The protein localises to the secreted. The polypeptide is HERV-H LTR-associating protein 1 (HHLA1) (Homo sapiens (Human)).